Consider the following 414-residue polypeptide: Serine--tRNA ligase (414 aa).

Residue 230–232 (TAE) participates in L-serine binding. 261-263 (RKE) serves as a coordination point for ATP. L-serine is bound at residue E284. 348–351 (EISS) serves as a coordination point for ATP. L-serine is bound at residue S382.

The protein belongs to the class-II aminoacyl-tRNA synthetase family. Type-1 seryl-tRNA synthetase subfamily. In terms of assembly, homodimer. The tRNA molecule binds across the dimer.

The protein localises to the cytoplasm. It catalyses the reaction tRNA(Ser) + L-serine + ATP = L-seryl-tRNA(Ser) + AMP + diphosphate + H(+). The catalysed reaction is tRNA(Sec) + L-serine + ATP = L-seryl-tRNA(Sec) + AMP + diphosphate + H(+). The protein operates within aminoacyl-tRNA biosynthesis; selenocysteinyl-tRNA(Sec) biosynthesis; L-seryl-tRNA(Sec) from L-serine and tRNA(Sec): step 1/1. Functionally, catalyzes the attachment of serine to tRNA(Ser). Is also able to aminoacylate tRNA(Sec) with serine, to form the misacylated tRNA L-seryl-tRNA(Sec), which will be further converted into selenocysteinyl-tRNA(Sec). This is Serine--tRNA ligase from Nitratiruptor sp. (strain SB155-2).